The chain runs to 1648 residues: Putative 1-phosphatidylinositol-3-phosphate 5-kinase FAB1C (1648 aa).

Positions 97 to 106 (YDKVHPRDSP) are enriched in basic and acidic residues. Disordered stretches follow at residues 97–116 (YDKV…ATES), 241–276 (QEDH…NDDA), 721–746 (SEIP…ENQL), and 1083–1139 (KTGD…GTSL). Positions 1084-1130 (TGDDNAPRNPEMHDPPKIDRRMQEGSDERDEQSHTDSEANGDNKDPE) are enriched in basic and acidic residues. The PIPK domain occupies 1316–1639 (NLNNRESEPS…RFRKAMTTYF (324 aa)).

In terms of assembly, component of the PI(3,5)P2 regulatory complex at least composed of ATG18, SAC/FIG4, FAB1 and VAC14. The cofactor is Mg(2+). It depends on Mn(2+) as a cofactor.

The catalysed reaction is a 1,2-diacyl-sn-glycero-3-phospho-(1D-myo-inositol-3-phosphate) + ATP = a 1,2-diacyl-sn-glycero-3-phospho-(1D-myo-inositol-3,5-bisphosphate) + ADP + H(+). Its function is as follows. The PI(3,5)P2 regulatory complex regulates both the synthesis and turnover of phosphatidylinositol 3,5-bisphosphate (PtdIns(3,5)P2). Catalyzes the phosphorylation of phosphatidylinositol 3-phosphate on the fifth hydroxyl of the myo-inositol ring, to form phosphatidylinositol 3,5-bisphosphate. The chain is Putative 1-phosphatidylinositol-3-phosphate 5-kinase FAB1C (FAB1C) from Arabidopsis thaliana (Mouse-ear cress).